We begin with the raw amino-acid sequence, 380 residues long: Queuine tRNA-ribosyltransferase (380 aa).

Asp-96 acts as the Proton acceptor in catalysis. Substrate contacts are provided by residues 96–100, Asp-150, Gln-193, and Gly-220; that span reads DSGGF. The RNA binding stretch occupies residues 251–257; it reads GVGAPDS. Residue Asp-270 is the Nucleophile of the active site. The interval 275–279 is RNA binding; important for wobble base 34 recognition; it reads TRIAR. Residues Cys-308, Cys-310, Cys-313, and His-339 each coordinate Zn(2+).

This sequence belongs to the queuine tRNA-ribosyltransferase family. As to quaternary structure, homodimer. Within each dimer, one monomer is responsible for RNA recognition and catalysis, while the other monomer binds to the replacement base PreQ1. Requires Zn(2+) as cofactor.

It catalyses the reaction 7-aminomethyl-7-carbaguanine + guanosine(34) in tRNA = 7-aminomethyl-7-carbaguanosine(34) in tRNA + guanine. It functions in the pathway tRNA modification; tRNA-queuosine biosynthesis. Catalyzes the base-exchange of a guanine (G) residue with the queuine precursor 7-aminomethyl-7-deazaguanine (PreQ1) at position 34 (anticodon wobble position) in tRNAs with GU(N) anticodons (tRNA-Asp, -Asn, -His and -Tyr). Catalysis occurs through a double-displacement mechanism. The nucleophile active site attacks the C1' of nucleotide 34 to detach the guanine base from the RNA, forming a covalent enzyme-RNA intermediate. The proton acceptor active site deprotonates the incoming PreQ1, allowing a nucleophilic attack on the C1' of the ribose to form the product. After dissociation, two additional enzymatic reactions on the tRNA convert PreQ1 to queuine (Q), resulting in the hypermodified nucleoside queuosine (7-(((4,5-cis-dihydroxy-2-cyclopenten-1-yl)amino)methyl)-7-deazaguanosine). The sequence is that of Queuine tRNA-ribosyltransferase from Streptococcus agalactiae serotype Ia (strain ATCC 27591 / A909 / CDC SS700).